A 294-amino-acid polypeptide reads, in one-letter code: Cell division control protein 2 homolog 2 (294 aa).

The Protein kinase domain maps to 4 to 287 (YEKVEKIGEG…ARGALEHEYF (284 aa)). ATP is bound by residues 10-18 (IGEGTYGVV) and lysine 33. Phosphothreonine is present on threonine 14. Tyrosine 15 carries the post-translational modification Phosphotyrosine. Aspartate 127 serves as the catalytic Proton acceptor. Position 161 is a phosphothreonine; by CAK (threonine 161).

The protein belongs to the protein kinase superfamily. CMGC Ser/Thr protein kinase family. CDC2/CDKX subfamily. In terms of tissue distribution, found in most organs including root, young leaf, stem, vegetative meristem and flower bud.

The catalysed reaction is L-seryl-[protein] + ATP = O-phospho-L-seryl-[protein] + ADP + H(+). The enzyme catalyses L-threonyl-[protein] + ATP = O-phospho-L-threonyl-[protein] + ADP + H(+). Phosphorylation at Thr-14 or Tyr-15 inactivates the enzyme, while phosphorylation at Thr-161 activates it. Plays a key role in the control of the eukaryotic cell cycle. Component of the kinase complex that phosphorylates the repetitive C-terminus of RNA polymerase II. This Medicago sativa (Alfalfa) protein is Cell division control protein 2 homolog 2 (CDC2B).